Here is a 122-residue protein sequence, read N- to C-terminus: Large ribosomal subunit protein uL14 (122 aa).

This sequence belongs to the universal ribosomal protein uL14 family. As to quaternary structure, part of the 50S ribosomal subunit. Forms a cluster with proteins L3 and L19. In the 70S ribosome, L14 and L19 interact and together make contacts with the 16S rRNA in bridges B5 and B8.

In terms of biological role, binds to 23S rRNA. Forms part of two intersubunit bridges in the 70S ribosome. The protein is Large ribosomal subunit protein uL14 of Mycolicibacterium gilvum (strain PYR-GCK) (Mycobacterium gilvum (strain PYR-GCK)).